Here is a 786-residue protein sequence, read N- to C-terminus: Ciliated left-right organizer ZP-N domains-containing protein (786 aa).

Residues 1-18 form the signal peptide; sequence MWGSVAVVWAICLACIQP.

As to expression, expressed specifically by cells of the ciliated left-right organizer.

In terms of biological role, plays a role in left-right patterning process. The polypeptide is Ciliated left-right organizer ZP-N domains-containing protein (Ciroz) (Mus musculus (Mouse)).